A 353-amino-acid chain; its full sequence is UPF0283 membrane protein YcjF (353 aa).

3 helical membrane-spanning segments follow: residues 70-90 (MVMG…VQWT), 100-120 (VALG…GSVV), and 213-233 (ESTL…FIAW).

The protein belongs to the UPF0283 family.

It localises to the cell inner membrane. The polypeptide is UPF0283 membrane protein YcjF (Escherichia coli O45:K1 (strain S88 / ExPEC)).